Consider the following 244-residue polypeptide: Eukaryotic translation initiation factor 6 (244 aa).

Phosphoserine; by CK1 is present on residues Ser-174 and Ser-175.

This sequence belongs to the eIF-6 family. Monomer. Associates with the 60S ribosomal subunit. Phosphorylation at Ser-174 and Ser-175 promotes nuclear export.

It is found in the cytoplasm. The protein resides in the nucleus. It localises to the nucleolus. In terms of biological role, binds to the 60S ribosomal subunit and prevents its association with the 40S ribosomal subunit to form the 80S initiation complex in the cytoplasm. Is also involved in ribosome biogenesis. Associates with pre-60S subunits in the nucleus and is involved in its nuclear export. This chain is Eukaryotic translation initiation factor 6 (tif6), found in Schizosaccharomyces pombe (strain 972 / ATCC 24843) (Fission yeast).